Consider the following 455-residue polypeptide: tRNA-2-methylthio-N(6)-dimethylallyladenosine synthase (455 aa).

The MTTase N-terminal domain maps to 3–117 (KGLYIESYGC…LPELIMKATR (115 aa)). Residues Cys12, Cys48, Cys80, Cys155, Cys159, and Cys162 each contribute to the [4Fe-4S] cluster site. The Radical SAM core domain maps to 141–375 (VSRGVSAFVS…LLTQQRLFTK (235 aa)).

The protein belongs to the methylthiotransferase family. MiaB subfamily. As to quaternary structure, monomer. It depends on [4Fe-4S] cluster as a cofactor.

It is found in the cytoplasm. It catalyses the reaction N(6)-dimethylallyladenosine(37) in tRNA + (sulfur carrier)-SH + AH2 + 2 S-adenosyl-L-methionine = 2-methylsulfanyl-N(6)-dimethylallyladenosine(37) in tRNA + (sulfur carrier)-H + 5'-deoxyadenosine + L-methionine + A + S-adenosyl-L-homocysteine + 2 H(+). Functionally, catalyzes the methylthiolation of N6-(dimethylallyl)adenosine (i(6)A), leading to the formation of 2-methylthio-N6-(dimethylallyl)adenosine (ms(2)i(6)A) at position 37 in tRNAs that read codons beginning with uridine. In Anaplasma marginale (strain St. Maries), this protein is tRNA-2-methylthio-N(6)-dimethylallyladenosine synthase.